A 92-amino-acid chain; its full sequence is Protein RESPONSE TO LOW SULFUR 4 (92 aa).

Residues 8 to 63 (VMVAASEVEELRQKNGEMEKAVEEMRKEMLQLWRRTQVAEEAEEHLCSQLAELEAE) are a coiled coil.

Functionally, required for flower development in short-day conditions. This Arabidopsis thaliana (Mouse-ear cress) protein is Protein RESPONSE TO LOW SULFUR 4.